We begin with the raw amino-acid sequence, 162 residues long: UPF0114 protein Sden_0436 (162 aa).

Helical transmembrane passes span 15-35 (IMAP…IKFF), 53-73 (LVLI…LIMV), and 136-156 (IMWY…MGYL).

This sequence belongs to the UPF0114 family.

The protein localises to the cell membrane. The chain is UPF0114 protein Sden_0436 from Shewanella denitrificans (strain OS217 / ATCC BAA-1090 / DSM 15013).